A 30-amino-acid chain; its full sequence is Pyrrole-2-carboxylate oxygenase (30 aa).

As to quaternary structure, homotrimer. FAD serves as cofactor.

It catalyses the reaction pyrrole-2-carboxylate + NADH + O2 + H(+) = 5-hydroxypyrrole-2-carboxylate + NAD(+) + H2O. Monooxygenase that initiates the degradation of pyrrole-2-carboxylate, which allows Arthrobacter sp. strain Py1 to grow on pyrrole-2-carboxylate as sole carbon, nitrogen, and energy source. To a lesser extent, can also use pyrrole, pyrrole-2-aldehyde, and indole-2-carboxylate as substrate. In Arthrobacter sp. (strain Py1), this protein is Pyrrole-2-carboxylate oxygenase.